The primary structure comprises 593 residues: Aspartate--tRNA(Asp/Asn) ligase (593 aa).

Glu182 provides a ligand contact to L-aspartate. The aspartate stretch occupies residues 206-209; that stretch reads QLFK. Residue Arg228 participates in L-aspartate binding. ATP-binding positions include 228-230 and Gln237; that span reads RDE. Residue His455 coordinates L-aspartate. Glu489 contributes to the ATP binding site. An L-aspartate-binding site is contributed by Arg496. 541-544 lines the ATP pocket; the sequence is GLDR.

The protein belongs to the class-II aminoacyl-tRNA synthetase family. Type 1 subfamily. In terms of assembly, homodimer.

The protein resides in the cytoplasm. The enzyme catalyses tRNA(Asx) + L-aspartate + ATP = L-aspartyl-tRNA(Asx) + AMP + diphosphate. Functionally, aspartyl-tRNA synthetase with relaxed tRNA specificity since it is able to aspartylate not only its cognate tRNA(Asp) but also tRNA(Asn). Reaction proceeds in two steps: L-aspartate is first activated by ATP to form Asp-AMP and then transferred to the acceptor end of tRNA(Asp/Asn). The polypeptide is Aspartate--tRNA(Asp/Asn) ligase (Geotalea uraniireducens (strain Rf4) (Geobacter uraniireducens)).